The following is a 138-amino-acid chain: Ergosterol biosynthetic protein 28 (138 aa).

A helical transmembrane segment spans residues 17-33; the sequence is LPYWLLFISVVSIFNSV. Asn40 carries an N-linked (GlcNAc...) asparagine glycan. 3 consecutive transmembrane segments (helical) span residues 56–75, 87–107, and 114–131; these read LSARTFGTWTLITSIVRFYG, LTQFTFAIAAWHFLSEWLYFG, and GLSGPLIVSSVSLVWMYL.

The protein belongs to the ERG28 family. As to quaternary structure, heterotetramer of ERG25, ERG26, ERG27 and ERG28. ERG28 acts as a scaffold to tether ERG27 and other 4,4-demethylation-related enzymes, forming a demethylation enzyme complex, in the endoplasmic reticulum. Interacts with ERG25, ERG26 and ERG27. Also interacts with ERG1, ERG3, ERG5, ERG6 and ERG11.

The protein localises to the endoplasmic reticulum membrane. In terms of biological role, part of the third module of ergosterol biosynthesis pathway that includes the late steps of the pathway. ERG28 has a role as a scaffold to help anchor the catalytic components of the C-4 demethylation complex ERG25, ERG26 and ERG27 to the endoplasmic reticulum. The third module or late pathway involves the ergosterol synthesis itself through consecutive reactions that mainly occur in the endoplasmic reticulum (ER) membrane. Firstly, the squalene synthase ERG9 catalyzes the condensation of 2 farnesyl pyrophosphate moieties to form squalene, which is the precursor of all steroids. Squalene synthase is crucial for balancing the incorporation of farnesyl diphosphate (FPP) into sterol and nonsterol isoprene synthesis. Secondly, the squalene epoxidase ERG1 catalyzes the stereospecific oxidation of squalene to (S)-2,3-epoxysqualene, which is considered to be a rate-limiting enzyme in steroid biosynthesis. Then, the lanosterol synthase ERG7 catalyzes the cyclization of (S)-2,3 oxidosqualene to lanosterol, a reaction that forms the sterol core. In the next steps, lanosterol is transformed to zymosterol through a complex process involving various demethylation, reduction and desaturation reactions. The lanosterol 14-alpha-demethylase ERG11 (also known as CYP51) catalyzes C14-demethylation of lanosterol to produce 4,4'-dimethyl cholesta-8,14,24-triene-3-beta-ol, which is critical for ergosterol biosynthesis. The C-14 reductase ERG24 reduces the C14=C15 double bond of 4,4-dimethyl-cholesta-8,14,24-trienol to produce 4,4-dimethyl-cholesta-8,24-dienol. 4,4-dimethyl-cholesta-8,24-dienol is substrate of the C-4 demethylation complex ERG25-ERG26-ERG27 in which ERG25 catalyzes the three-step monooxygenation required for the demethylation of 4,4-dimethyl and 4alpha-methylsterols, ERG26 catalyzes the oxidative decarboxylation that results in a reduction of the 3-beta-hydroxy group at the C-3 carbon to an oxo group, and ERG27 is responsible for the reduction of the keto group on the C-3. ERG28 has a role as a scaffold to help anchor ERG25, ERG26 and ERG27 to the endoplasmic reticulum and ERG29 regulates the activity of the iron-containing C4-methylsterol oxidase ERG25. Then, the sterol 24-C-methyltransferase ERG6 catalyzes the methyl transfer from S-adenosyl-methionine to the C-24 of zymosterol to form fecosterol. The C-8 sterol isomerase ERG2 catalyzes the reaction which results in unsaturation at C-7 in the B ring of sterols and thus converts fecosterol to episterol. The sterol-C5-desaturase ERG3 then catalyzes the introduction of a C-5 double bond in the B ring to produce 5-dehydroepisterol. The C-22 sterol desaturase ERG5 further converts 5-dehydroepisterol into ergosta-5,7,22,24(28)-tetraen-3beta-ol by forming the C-22(23) double bond in the sterol side chain. Finally, ergosta-5,7,22,24(28)-tetraen-3beta-ol is substrate of the C-24(28) sterol reductase ERG4 to produce ergosterol. The protein is Ergosterol biosynthetic protein 28 of Candida albicans (strain SC5314 / ATCC MYA-2876) (Yeast).